We begin with the raw amino-acid sequence, 146 residues long: Hemoglobin subunit beta (146 aa).

V1 bears the N-acetylvaline mark. The Globin domain occupies 2–146 (HLTPEEKTAV…VANALAHKYH (145 aa)). Residue T12 is modified to Phosphothreonine. Phosphoserine is present on S44. K59 bears the N6-acetyllysine mark. H63 contacts heme b. K82 bears the N6-acetyllysine mark. Position 92 (H92) interacts with heme b. At C93 the chain carries S-nitrosocysteine. Residue K144 is modified to N6-acetyllysine.

The protein belongs to the globin family. As to quaternary structure, heterotetramer of two alpha chains and two beta chains. Red blood cells.

Involved in oxygen transport from the lung to the various peripheral tissues. The sequence is that of Hemoglobin subunit beta (HBB) from Mandrillus sphinx (Mandrill).